The primary structure comprises 564 residues: MNNSSELIAVINGFRNSGRFCDISIVINDERINAHKLILSGASEYFSILFSNNFIDSNEYEVNLSHLDYQSVNDLIDYIYGIPLSLTNDNVKYILSTADFLQIGSAITECENYILKNLCSKNCIDFYIYADKYNNKKIESASFNTILQNILRLINDENFKYLTEESMIKILSDDMLNIKNEDFAPLILIKWLESTQQSCTVELLRCLRISLLSPQVIKSLYSHQLVSSIYECITFLNNIAFLDESFPRYHSIELISIGISNSHDKISINCYNHKKNTWEMISSRRYRCSFAVAVLDNIIYMMGGYDQSPYRSSKVIAYNTCTNSWIYDIPELKYPRSNCGGLADDEYIYCIGGIRDQDSSLTSSIDKWKPSKPYWQKYAKMREPKCDMGVAMLNGLIYVMGGIVKGDTCTDALESLSEDGWMKHQRLPIKMSNMSTIVHDGKIYISGGYNNSSVVNVISNLVLSYNPIYDEWTKLSSLNIPRINPALWSAHNKLYVGGGISDDVRTNTSETYDKEKDCWTLDNGHVLPRNYIMYKCEPIKHKYPLEKTQYTNDFLKYLESFIGS.

The region spanning 21–88 is the BTB domain; the sequence is CDISIVINDE…IYGIPLSLTN (68 aa). Kelch repeat units follow at residues 252–297, 298–346, 347–395, 397–441, 442–492, and 494–539; these read IELI…VLDN, IIYM…ADDE, YIYC…MLNG, IYVM…VHDG, KIYI…SAHN, and LYVG…CEPI.

The protein belongs to the poxviruses A55 protein family. In terms of assembly, interacts (via BTB domain) with host CUL3.

The protein localises to the host cytoplasm. Its function is as follows. Probable substrate-specific adapter of CUL3-containing E3 ubiquitin-protein ligases which mediate the ubiquitination and subsequent proteasomal degradation of host target proteins. The chain is Kelch repeat and BTB domain-containing protein A55 (KBTB1) from Bos taurus (Bovine).